The following is a 173-amino-acid chain: Alpha-crystallin A chain (173 aa).

Met1 carries the post-translational modification N-acetylmethionine. The interval 1-63 is required for complex formation with BFSP1 and BFSP2; sequence MDVTIQHPWF…RTVLDSGISE (63 aa). Residue Gln6 is modified to Deamidated glutamine; partial. Ser45 carries the post-translational modification Phosphoserine. Gln50 carries the deamidated glutamine; partial modification. One can recognise a sHSP domain in the interval 52–162; it reads LFRTVLDSGI…SHSERAIPVS (111 aa). N6-acetyllysine is present on Lys99. A Zn(2+)-binding site is contributed by His100. A Deamidated asparagine; partial modification is found at Asn101. The Zn(2+) site is built by Glu102 and His107. Ser122 is modified (phosphoserine). Asn123 is modified (deamidated asparagine; partial). Cys131 and Cys142 are joined by a disulfide. The residue at position 147 (Gln147) is a Deamidated glutamine; partial. Positions 147–173 are disordered; sequence QSGMDASHSERAIPVSREEKPSSAPSS. A compositionally biased stretch (basic and acidic residues) spans 153 to 167; the sequence is SHSERAIPVSREEKP. Position 154 (His154) interacts with Zn(2+). The O-linked (GlcNAc) serine glycan is linked to Ser162.

This sequence belongs to the small heat shock protein (HSP20) family. Heteromer composed of three CRYAA and one CRYAB subunits. Inter-subunit bridging via zinc ions enhances stability, which is crucial as there is no protein turn over in the lens. Can also form homodimers and homotetramers (dimers of dimers) which serve as the building blocks of homooligomers. Within homooligomers, the zinc-binding motif is created from residues of 3 different molecules. His-100 and Glu-102 from one molecule are ligands of the zinc ion, and His-107 and His-154 residues from additional molecules complete the site with tetrahedral coordination geometry. Part of a complex required for lens intermediate filament formation composed of BFSP1, BFSP2 and CRYAA. Post-translationally, undergoes age-dependent proteolytical cleavage at the C-terminus.

The protein resides in the cytoplasm. It localises to the nucleus. In terms of biological role, contributes to the transparency and refractive index of the lens. In its oxidized form (absence of intramolecular disulfide bond), acts as a chaperone, preventing aggregation of various proteins under a wide range of stress conditions. Required for the correct formation of lens intermediate filaments as part of a complex composed of BFSP1, BFSP2 and CRYAA. This Procavia capensis (Rock hyrax) protein is Alpha-crystallin A chain (CRYAA).